The sequence spans 425 residues: Enolase (425 aa).

(2R)-2-phosphoglycerate is bound at residue Gln-163. Catalysis depends on Glu-205, which acts as the Proton donor. Positions 242, 285, and 312 each coordinate Mg(2+). (2R)-2-phosphoglycerate is bound by residues Lys-337, Arg-366, Ser-367, and Lys-388. Lys-337 functions as the Proton acceptor in the catalytic mechanism.

It belongs to the enolase family. Mg(2+) is required as a cofactor.

It localises to the cytoplasm. The protein resides in the secreted. Its subcellular location is the cell surface. It carries out the reaction (2R)-2-phosphoglycerate = phosphoenolpyruvate + H2O. The protein operates within carbohydrate degradation; glycolysis; pyruvate from D-glyceraldehyde 3-phosphate: step 4/5. Its function is as follows. Catalyzes the reversible conversion of 2-phosphoglycerate (2-PG) into phosphoenolpyruvate (PEP). It is essential for the degradation of carbohydrates via glycolysis. The polypeptide is Enolase (Jannaschia sp. (strain CCS1)).